We begin with the raw amino-acid sequence, 477 residues long: Aspartyl/glutamyl-tRNA(Asn/Gln) amidotransferase subunit B (477 aa).

It belongs to the GatB/GatE family. GatB subfamily. As to quaternary structure, heterotrimer of A, B and C subunits.

The catalysed reaction is L-glutamyl-tRNA(Gln) + L-glutamine + ATP + H2O = L-glutaminyl-tRNA(Gln) + L-glutamate + ADP + phosphate + H(+). The enzyme catalyses L-aspartyl-tRNA(Asn) + L-glutamine + ATP + H2O = L-asparaginyl-tRNA(Asn) + L-glutamate + ADP + phosphate + 2 H(+). Its function is as follows. Allows the formation of correctly charged Asn-tRNA(Asn) or Gln-tRNA(Gln) through the transamidation of misacylated Asp-tRNA(Asn) or Glu-tRNA(Gln) in organisms which lack either or both of asparaginyl-tRNA or glutaminyl-tRNA synthetases. The reaction takes place in the presence of glutamine and ATP through an activated phospho-Asp-tRNA(Asn) or phospho-Glu-tRNA(Gln). This is Aspartyl/glutamyl-tRNA(Asn/Gln) amidotransferase subunit B from Lactococcus lactis subsp. cremoris (strain SK11).